The chain runs to 184 residues: Cell wall protein phiA (184 aa).

The signal sequence occupies residues 1-21 (MQLKNLIFAAATAAALPATDA). Asn-58 carries N-linked (GlcNAc...) asparagine glycosylation.

It belongs to the phiA family.

It is found in the secreted. The protein resides in the cell wall. In terms of biological role, cell wall protein involved in development of asexual structures such as phialide and conidium development, and thus required for spore formation. Plays a role as a general stress protectant produced by the fungus in competition with antagonistic bacteria. The chain is Cell wall protein phiA from Aspergillus niger (strain ATCC MYA-4892 / CBS 513.88 / FGSC A1513).